Reading from the N-terminus, the 181-residue chain is Small ribosomal subunit protein cS23 (181 aa).

Residues 1–40 are disordered; it reads MLPMSVHPATTPALASRPRVSLPRPSTPSSSSSLVHLKSR. Over residues 14-36 the composition is skewed to low complexity; the sequence is LASRPRVSLPRPSTPSSSSSLVH.

Belongs to the chloroplast-specific ribosomal protein cS23 family. In terms of assembly, part of the 30S ribosomal subunit.

The protein resides in the plastid. The protein localises to the chloroplast. Functionally, component of the chloroplast ribosome (chloro-ribosome), a dedicated translation machinery responsible for the synthesis of chloroplast genome-encoded proteins, including proteins of the transcription and translation machinery and components of the photosynthetic apparatus. This chain is Small ribosomal subunit protein cS23 (PSRP3), found in Hordeum vulgare (Barley).